The sequence spans 330 residues: Beta-ketoacyl-[acyl-carrier-protein] synthase III (330 aa).

Active-site residues include C115 and H255. The segment at 256–260 (QANVR) is ACP-binding. N285 is an active-site residue.

The protein belongs to the thiolase-like superfamily. FabH family. As to quaternary structure, homodimer.

Its subcellular location is the cytoplasm. The catalysed reaction is malonyl-[ACP] + acetyl-CoA + H(+) = 3-oxobutanoyl-[ACP] + CO2 + CoA. It participates in lipid metabolism; fatty acid biosynthesis. In terms of biological role, catalyzes the condensation reaction of fatty acid synthesis by the addition to an acyl acceptor of two carbons from malonyl-ACP. Catalyzes the first condensation reaction which initiates fatty acid synthesis and may therefore play a role in governing the total rate of fatty acid production. Possesses both acetoacetyl-ACP synthase and acetyl transacylase activities. Its substrate specificity determines the biosynthesis of branched-chain and/or straight-chain of fatty acids. The chain is Beta-ketoacyl-[acyl-carrier-protein] synthase III from Symbiobacterium thermophilum (strain DSM 24528 / JCM 14929 / IAM 14863 / T).